The chain runs to 348 residues: Chaperone protein DnaJ (348 aa).

Positions 3–65 (DLYGILGVDH…EQRQRYDRHV (63 aa)) constitute a J domain. The CR-type zinc finger occupies 109–191 (GGSQVVKIDS…CYGNGSRSAP (83 aa)). The Zn(2+) site is built by cysteine 122, cysteine 125, cysteine 139, cysteine 142, cysteine 165, cysteine 168, cysteine 179, and cysteine 182. 4 CXXCXGXG motif repeats span residues 122–129 (CDVCNGTR), 139–146 (CFDCNGSG), 165–172 (CSKCRGNG), and 179–186 (CRRCYGNG).

This sequence belongs to the DnaJ family. In terms of assembly, homodimer. The cofactor is Zn(2+).

It is found in the cytoplasm. Participates actively in the response to hyperosmotic and heat shock by preventing the aggregation of stress-denatured proteins and by disaggregating proteins, also in an autonomous, DnaK-independent fashion. Unfolded proteins bind initially to DnaJ; upon interaction with the DnaJ-bound protein, DnaK hydrolyzes its bound ATP, resulting in the formation of a stable complex. GrpE releases ADP from DnaK; ATP binding to DnaK triggers the release of the substrate protein, thus completing the reaction cycle. Several rounds of ATP-dependent interactions between DnaJ, DnaK and GrpE are required for fully efficient folding. Also involved, together with DnaK and GrpE, in the DNA replication of plasmids through activation of initiation proteins. In Tropheryma whipplei (strain TW08/27) (Whipple's bacillus), this protein is Chaperone protein DnaJ.